The following is a 281-amino-acid chain: NADPH-dependent 7-cyano-7-deazaguanine reductase (281 aa).

Position 87–89 (87–89 (IES)) interacts with substrate. 89–90 (SK) is a binding site for NADPH. The active-site Thioimide intermediate is cysteine 188. The active-site Proton donor is the aspartate 195. Position 227–228 (227–228 (HE)) interacts with substrate. Position 256–257 (256–257 (RG)) interacts with NADPH. The disordered stretch occupies residues 261 to 281 (INPYRSTEQAKPDHNHRMARQ). The span at 268–281 (EQAKPDHNHRMARQ) shows a compositional bias: basic and acidic residues.

This sequence belongs to the GTP cyclohydrolase I family. QueF type 2 subfamily. In terms of assembly, homodimer.

Its subcellular location is the cytoplasm. It catalyses the reaction 7-aminomethyl-7-carbaguanine + 2 NADP(+) = 7-cyano-7-deazaguanine + 2 NADPH + 3 H(+). It participates in tRNA modification; tRNA-queuosine biosynthesis. Functionally, catalyzes the NADPH-dependent reduction of 7-cyano-7-deazaguanine (preQ0) to 7-aminomethyl-7-deazaguanine (preQ1). This Vibrio vulnificus (strain CMCP6) protein is NADPH-dependent 7-cyano-7-deazaguanine reductase.